The chain runs to 466 residues: Asparagine--tRNA ligase (466 aa).

Belongs to the class-II aminoacyl-tRNA synthetase family. Homodimer.

Its subcellular location is the cytoplasm. The enzyme catalyses tRNA(Asn) + L-asparagine + ATP = L-asparaginyl-tRNA(Asn) + AMP + diphosphate + H(+). The protein is Asparagine--tRNA ligase of Photorhabdus laumondii subsp. laumondii (strain DSM 15139 / CIP 105565 / TT01) (Photorhabdus luminescens subsp. laumondii).